We begin with the raw amino-acid sequence, 363 residues long: NAD(P)H-quinone oxidoreductase subunit 1, chloroplastic (363 aa).

The next 6 helical transmembrane spans lie at 30–50 (LVPI…IVWL), 104–124 (IAVI…HLVL), 127–147 (LGIG…GLLM), 253–273 (FGLF…FVTV), 300–320 (VFGT…FLFI), and 343–363 (FLLP…LLSL).

Belongs to the complex I subunit 1 family. In terms of assembly, NDH is composed of at least 16 different subunits, 5 of which are encoded in the nucleus.

It is found in the plastid. The protein resides in the chloroplast thylakoid membrane. It catalyses the reaction a plastoquinone + NADH + (n+1) H(+)(in) = a plastoquinol + NAD(+) + n H(+)(out). The enzyme catalyses a plastoquinone + NADPH + (n+1) H(+)(in) = a plastoquinol + NADP(+) + n H(+)(out). NDH shuttles electrons from NAD(P)H:plastoquinone, via FMN and iron-sulfur (Fe-S) centers, to quinones in the photosynthetic chain and possibly in a chloroplast respiratory chain. The immediate electron acceptor for the enzyme in this species is believed to be plastoquinone. Couples the redox reaction to proton translocation, and thus conserves the redox energy in a proton gradient. This is NAD(P)H-quinone oxidoreductase subunit 1, chloroplastic from Piper cenocladum (Ant piper).